A 206-amino-acid chain; its full sequence is Bacteriochlorophyll synthase 23 kDa chain (206 aa).

The protein operates within porphyrin-containing compound metabolism; bacteriochlorophyll biosynthesis (light-independent). This is Bacteriochlorophyll synthase 23 kDa chain (bchJ) from Cereibacter sphaeroides (strain ATCC 17023 / DSM 158 / JCM 6121 / CCUG 31486 / LMG 2827 / NBRC 12203 / NCIMB 8253 / ATH 2.4.1.) (Rhodobacter sphaeroides).